The following is a 354-amino-acid chain: MKSITFFVFNICSILALLSHCEDNDIYSFDIVNETNWLKIAKNIFKGKSPSNFTIIPFNNTGSSNDNESNKEESVLLIRKKIKSNKNHDSSIISGDTVNGDISDLNYTASNFSDNSEDIEDNQKYPTTSYNSFNHLNSNIAFNEESEYIEINSESDLENKIKDINIKSNLEENNTMNESGKVDSKYELTGDEKCGKSLKLGNISNQTNQETITQSLSVGEILCIDLEGNAGTGYLWVLLGIHKDEPIINPENFPTKLTKKSFFSEEISVTQPKKYKIDEHDSSKNVNREIESPEQKESDSKPKKPQMQLLGGPDRMRSVIKGHKPGKYYIVYSYYRPFSPTSGANTKIIYVTVQ.

Residues 1-21 (MKSITFFVFNICSILALLSHC) form the signal peptide. A BC loop; binds and inhibits the active site cavity of cysteine proteases motif is present at residues 226-236 (LEGNAGTGYLW). The tract at residues 274–317 (KYKIDEHDSSKNVNREIESPEQKESDSKPKKPQMQLLGGPDRMR) is disordered. The segment covering 275–302 (YKIDEHDSSKNVNREIESPEQKESDSKP) has biased composition (basic and acidic residues).

The protein belongs to the protease inhibitor I71 family. In terms of assembly, oligomer; probably composed of 10 monomers. In terms of processing, during the liver stage, proteolytically cleaved.

The protein localises to the secreted. The protein resides in the cytoplasmic vesicle. It localises to the secretory vesicle. It is found in the microneme. Its subcellular location is the host cytoplasm. The protein localises to the parasitophorous vacuole lumen. Cysteine protease inhibitor. Required for the invasion of host erythrocytes by merozoites. In the mosquito vector, essential for the gliding motility of hemocoel sporozoites and, therefore, for salivary gland invasion and the subsequent transmission from the mosquito to the mammalian host. Required for the invasion of host hepatocytes. During the liver stage, may prevent host hepatocyte cell death likely by inhibiting host cysteine proteases. This is Falstatin from Plasmodium berghei (strain Anka).